The following is a 244-amino-acid chain: MSDHTIPEYLQPALAQLEKARAAHLENARLMDETVTAIERAEQEKNALAQADGNDADDWRTAFRAAGGVLSDELKQRHIERVARRELVQEYDNLAVVLNFERERLKGACDSTATAYRKAHHHLLSLYAEHELEHALNETCEALVRAMHLSILVQENPLANTTGHQGYVAPEKAVMQQVKSSLEQKIKQMQISLTGEPVLRLTGLSAATLPHMDYEVAGTPAQRKVWQDKIDQQGAELKARGLLS.

Although P4 acquires its capsid proteins from helper phages such as P2, it possesses the ability to assemble capsids that are only one-third the size of the helper's capsid. The sid protein is responsible for the assembly of P4-sized shells. It forms a P4-specific scaffold with icosahedral symmetry on the outside of the procapsid-like particles. This Enterobacteria phage P4 (Bacteriophage P4) protein is Glycoprotein 3 (sid).